We begin with the raw amino-acid sequence, 95 residues long: MAFKPLHDRVLVRRVQSDEKTKGGLIIPDTAKEKPAEGEVVSCGEGARKDSGELIAMSVKAGDRVLFGKWSGTEVTIDGAELLIMKESDILGILS.

This sequence belongs to the GroES chaperonin family. As to quaternary structure, heptamer of 7 subunits arranged in a ring. Interacts with the chaperonin GroEL.

Its subcellular location is the cytoplasm. Functionally, together with the chaperonin GroEL, plays an essential role in assisting protein folding. The GroEL-GroES system forms a nano-cage that allows encapsulation of the non-native substrate proteins and provides a physical environment optimized to promote and accelerate protein folding. GroES binds to the apical surface of the GroEL ring, thereby capping the opening of the GroEL channel. In Cereibacter sphaeroides (strain KD131 / KCTC 12085) (Rhodobacter sphaeroides), this protein is Co-chaperonin GroES.